Here is a 294-residue protein sequence, read N- to C-terminus: 1D-myo-inositol 2-acetamido-2-deoxy-alpha-D-glucopyranoside deacetylase (294 aa).

His-15, Asp-18, and His-150 together coordinate Zn(2+).

Belongs to the MshB deacetylase family. Zn(2+) is required as a cofactor.

It catalyses the reaction 1D-myo-inositol 2-acetamido-2-deoxy-alpha-D-glucopyranoside + H2O = 1D-myo-inositol 2-amino-2-deoxy-alpha-D-glucopyranoside + acetate. In terms of biological role, catalyzes the deacetylation of 1D-myo-inositol 2-acetamido-2-deoxy-alpha-D-glucopyranoside (GlcNAc-Ins) in the mycothiol biosynthesis pathway. The chain is 1D-myo-inositol 2-acetamido-2-deoxy-alpha-D-glucopyranoside deacetylase from Streptomyces avermitilis (strain ATCC 31267 / DSM 46492 / JCM 5070 / NBRC 14893 / NCIMB 12804 / NRRL 8165 / MA-4680).